The following is an 858-amino-acid chain: Tetratricopeptide repeat protein 7A (858 aa).

A Phosphoserine modification is found at serine 51. 6 TPR repeats span residues 121–157, 177–210, 414–447, 497–531, 533–565, and 566–599; these read CEAMLILGKLHYVEGSYRDAISMYARAGIDDMSMENK, ERLPNSIASRFRLTEREEEVITCFERASWIAQVF, FHLWYQVALSMVACGKSAYAVSLLRECVKLRPSD, YSLQATDATLKSKQDELHRKALQTLERAQQLAPSD, QVILYVSLQLALVRQISSAMEQLQEALKVRKDD, and AHALHLLALLFSAQKHHQHALDVVNMAITEHPEN. At serine 182 the chain carries Phosphoserine. 4 positions are modified to phosphoserine: serine 647, serine 678, serine 679, and serine 690. A Phosphothreonine modification is found at threonine 693. TPR repeat units lie at residues 745 to 778, 780 to 812, and 813 to 846; these read HSVLYMRGRLAEVKGNLEEAKQLYKEALTVNPDG, RIMHSLGLMLSRLGHKSLAQKVLRDAVERQSTC, and HEAWQGLGEVLQAQGQNEAAVDCFLTALELEASS.

In terms of assembly, component of a phosphatidylinositol 4-kinase (PI4K) complex, composed of PI4KA, EFR3 (EFR3A or EFR3B), TTC7 (TTC7A or TTC7B) and HYCC (HYCC1 or HYCC2). Interacts with PI4KA. Interaction with PI4KA is direct. Interacts with EFR3 (EFR3A or EFR3B), interaction is direct. Interacts with HYCC (HYCC1 or HYCC2), interaction is direct. Association with the PI4K complex is strongly reduced by TMEM150A. As to expression, expressed in epithelial cells of the intestine, thymus, and pancreas (at protein level).

It is found in the cytoplasm. Its subcellular location is the cell membrane. Its function is as follows. Component of a complex required to localize phosphatidylinositol 4-kinase (PI4K) to the plasma membrane. The complex acts as a regulator of phosphatidylinositol 4-phosphate (PtdIns(4)P) synthesis. In the complex, plays a central role in bridging PI4KA to EFR3B and HYCC1, via direct interactions. This chain is Tetratricopeptide repeat protein 7A, found in Homo sapiens (Human).